The chain runs to 198 residues: V-type ATP synthase subunit E (198 aa).

This sequence belongs to the V-ATPase E subunit family.

In terms of biological role, produces ATP from ADP in the presence of a proton gradient across the membrane. The chain is V-type ATP synthase subunit E from Clostridium perfringens (strain ATCC 13124 / DSM 756 / JCM 1290 / NCIMB 6125 / NCTC 8237 / Type A).